The primary structure comprises 223 residues: MTKQIARMIDHTALKPDTVKSEIEALCKEARVYGFASVCVNPCWVKLCAELLKESEVKVCTVIGFPLGAASPETKAFETRQAIADGAGEVDMVINIGALKDRDTGTVEHDIRAVTDAADGKALVKVIIETSLLTDEEKRLACELAVKAGADFVKTSTGFSGGGATVRDIKLMREAVGPDIGVKASGGVRDKESALAMIEAGATRIGASAGVSIVKGLTADEDY.

Residue D91 is the Proton donor/acceptor of the active site. K154 acts as the Schiff-base intermediate with acetaldehyde in catalysis. K183 serves as the catalytic Proton donor/acceptor.

Belongs to the DeoC/FbaB aldolase family. DeoC type 1 subfamily.

The protein localises to the cytoplasm. It carries out the reaction 2-deoxy-D-ribose 5-phosphate = D-glyceraldehyde 3-phosphate + acetaldehyde. It participates in carbohydrate degradation; 2-deoxy-D-ribose 1-phosphate degradation; D-glyceraldehyde 3-phosphate and acetaldehyde from 2-deoxy-alpha-D-ribose 1-phosphate: step 2/2. Its function is as follows. Catalyzes a reversible aldol reaction between acetaldehyde and D-glyceraldehyde 3-phosphate to generate 2-deoxy-D-ribose 5-phosphate. In Bacillus licheniformis (strain ATCC 14580 / DSM 13 / JCM 2505 / CCUG 7422 / NBRC 12200 / NCIMB 9375 / NCTC 10341 / NRRL NRS-1264 / Gibson 46), this protein is Deoxyribose-phosphate aldolase 1.